A 425-amino-acid polypeptide reads, in one-letter code: RNA polymerase II-associated factor 1 homolog (425 aa).

Positions 152–174 (KKNQQVEDMYRDKQSQIDAINKT) form a coiled coil. Residues 331–425 (SRKSKLTLTY…KEPTVDSDSD (95 aa)) form a disordered region. Composition is skewed to basic and acidic residues over residues 344 to 380 (SELEQKDMNKREAELYEQPKTRKQEILEKIQEKKEEG) and 393 to 402 (DKPQKSRSDS).

This sequence belongs to the PAF1 family. Component of the PAF1 complex which consists of at least cdc-73, ctr-9, leo-1, pafo-1 and rtfo-1.

The protein resides in the nucleus. Component of the PAF1 complex which is a multifunctional complex involved in transcription initiation via genetic interactions with TATA-binding proteins, elongation and transcription-coupled histone modification. This Caenorhabditis elegans protein is RNA polymerase II-associated factor 1 homolog.